Consider the following 93-residue polypeptide: Small ribosomal subunit protein uS19 (93 aa).

It belongs to the universal ribosomal protein uS19 family.

Functionally, protein S19 forms a complex with S13 that binds strongly to the 16S ribosomal RNA. The protein is Small ribosomal subunit protein uS19 of Rhodococcus erythropolis (strain PR4 / NBRC 100887).